The sequence spans 33 residues: rho operon leader peptide (33 aa).

Over residues 1-25 the composition is skewed to polar residues; that stretch reads MRSEQISGSSLNPSCRFSSAYSPVT. Positions 1-33 are disordered; it reads MRSEQISGSSLNPSCRFSSAYSPVTRQRKDMSR.

This chain is rho operon leader peptide (rhoL), found in Escherichia coli O157:H7.